The sequence spans 294 residues: DGYICNNGMDKEERKMCGLLLLPLRSVSPSAYLAAVNAASERAPMIYPRAVSEGQFYSPPESLAGSEEDLDEEGLGRRAVSPQEKALVRQGKEAMAVVEQILAQEENWKFEKNNDVGDSVYTLEIPFHGKTFILKAFMQCPAELVYQEVILQPEKMAQWNKTVSGCQILQRVDDNTLVSYDIASGAAGGVVSARDFVNVRRVERKRDCYVSAGMATDHDGKPPHSRYVRGENGPGGFVVLKSSSNPSVCTFIWVLNTDLKGRLPRYLIHQSLAATMFEFMAHLRQRIRDLRSTR.

Residues 1-66 enclose the MENTAL domain; sequence DGYICNNGMD…YSPPESLAGS (66 aa). The short motif at 55–61 is the FFAT element; that stretch reads QFYSPPE. The tract at residues 58-77 is disordered; it reads SPPESLAGSEEDLDEEGLGR. An START domain is found at 79–292; it reads AVSPQEKALV…LRQRIRDLRS (214 aa).

This sequence belongs to the STARD3 family. Homodimer. In terms of processing, phosphorylated. Phosphorylation allows the tethering of two membranes that participates in the formation of ER-endosome contacts. Phosphorylation of FFAT motif drives membrane tethering between the endoplasmic reticulum and late endosomes that in turn allows the efficient transport of sterol mediated by the START domain.

It is found in the late endosome membrane. It carries out the reaction cholesterol(in) = cholesterol(out). Sterol-binding protein that mediates cholesterol transport from the endoplasmic reticulum to endosomes. The sterol transport mechanism is triggered by phosphorylation of FFAT motif that leads to membrane tethering between the endoplasmic reticulum and late endosomes. Acts as a lipid transfer protein that redirects sterol to the endosome at the expense of the cell membrane and favors membrane formation inside endosomes. This is StAR-related lipid transfer protein 3 from Salvelinus fontinalis (Brook trout).